Here is a 154-residue protein sequence, read N- to C-terminus: Low molecular weight protein-tyrosine-phosphatase PtpA (154 aa).

The active-site Nucleophile is the C8. R14 is an active-site residue. Catalysis depends on D120, which acts as the Proton donor.

This sequence belongs to the low molecular weight phosphotyrosine protein phosphatase family.

It carries out the reaction O-phospho-L-tyrosyl-[protein] + H2O = L-tyrosyl-[protein] + phosphate. In terms of biological role, dephosphorylates the phosphotyrosine-containing proteins. The polypeptide is Low molecular weight protein-tyrosine-phosphatase PtpA (ptpA) (Staphylococcus haemolyticus (strain JCSC1435)).